The primary structure comprises 208 residues: DNA-binding protein HupB (208 aa).

Residues 1–90 (MNKAELIDVL…PGAQFKAVIS (90 aa)) form a bacterial histone-like domain region. The residue at position 3 (lysine 3) is an N6-acetyllysine. Position 3 is an N6-acetyllysine; alternate; partial (lysine 3). Lysine 3 carries the N6-methyllysine; alternate; partial modification. Residue lysine 72 is modified to N6-acetyllysine; partial. N6-methyllysine; partial is present on lysine 86. Residues 92–208 (AQKLPADGPA…KKAPAKKGRR (117 aa)) form a C-terminus, required for nucleoid localization region. An N6-acetyllysine; alternate; partial mark is found at lysine 94 and lysine 103. Lysine 94 and lysine 103 each carry N6-methyllysine; alternate; partial. Residues 96–208 (PADGPAVKRG…KKAPAKKGRR (113 aa)) are disordered. The segment at 101 to 205 (AVKRGVTAGP…AAAKKAPAKK (105 aa)) is degenerate repeats region. Over residues 113 to 208 (KAAKKAPAKK…KKAPAKKGRR (96 aa)) the composition is skewed to basic residues. An N6-acetyllysine mark is found at lysine 116, lysine 136, lysine 149, and lysine 168.

It belongs to the bacterial histone-like protein family. Long actinobacterial subfamily. In terms of assembly, may form oligomers. Interacts with RNase E (rne). In addition to the identifed modifications, is also methylated on one of Arg-53; Arg-54 or Arg-55.

The protein resides in the cytoplasm. It localises to the nucleoid. It is found in the secreted. Its subcellular location is the cell wall. It catalyses the reaction 4 Fe(2+) + O2 + 4 H(+) = 4 Fe(3+) + 2 H2O. Its activity is regulated as follows. Trans-stilbene derivative 4,4'-[(E)-ethene-1,2 diylbis({5[(phenylcarbonyl)amino]benzene-2,1-diyl}sulfonylimino)] dibenzoic acid (SD1) inhibits DNA binding at 50 uM. SD1 does not inhibit growth in a range of 3-1600 uM. A nucleoid-associated protein (NAP) that plays a crucial role in local chromosome architecture. Helps organize newly replicated oriC proximal regions and contributes to the timing of replication initiation and coordinating replication with chromosome segregation. There are between 30,000-60,000 molecules in a log phase cell; the protein-DNA complex is dynamic during the cell cycle, with more complexes near the cell ends. Binds irregularly along the chromosome with higher binding near the origin of replication (oriC) and lowest binding near the chromosome terminus (ter). Binds DNA non-sequence specifically via both its N- and C-terminal domains with high affinity, has no preference for linear or supercoiled DNA. Binds four-way junction DNA. Represses T7 RNA polymerase in vitro. The C-terminal domain enhances DNA end-joining in vitro in the presence of T4 DNA ligase. RNase E and HupB jointly contribute to cellular adaptation to changing growth conditions and survival during antibiotic treatment. In terms of biological role, has ferroxidase activity, converts Fe(2+) into Fe(3+). Binds Fe(3+) but not Fe(2+); prevents the generation of hydroxyl radicals by the Fenton reaction and thus protects DNA from damage. May function in iron storage. Its function is as follows. Plays a role in epigenetic resistance to antibiotics. Growth on levels of isoniazid (INH) near the minimal inhibitory concentration (MIC) kills most bacteria. The surviving cells grow as either large or small colony variants (SCV), evidence suggest SCVs are associated with persistent infections. Mutating this protein leads to specific loss of SCVs. Functionally, may play a role in cell wall assembly. This Mycolicibacterium smegmatis (strain ATCC 700084 / mc(2)155) (Mycobacterium smegmatis) protein is DNA-binding protein HupB.